Here is a 181-residue protein sequence, read N- to C-terminus: RING-H2 finger protein ATL56 (181 aa).

A disordered region spans residues Met1–Lys24. The span at Ser15–Lys24 shows a compositional bias: pro residues. The helical transmembrane segment at Leu32–Ile52 threads the bilayer. The segment at Cys110–Arg152 adopts an RING-type; atypical zinc-finger fold.

Belongs to the RING-type zinc finger family. ATL subfamily.

The protein resides in the membrane. It catalyses the reaction S-ubiquitinyl-[E2 ubiquitin-conjugating enzyme]-L-cysteine + [acceptor protein]-L-lysine = [E2 ubiquitin-conjugating enzyme]-L-cysteine + N(6)-ubiquitinyl-[acceptor protein]-L-lysine.. It participates in protein modification; protein ubiquitination. This Arabidopsis thaliana (Mouse-ear cress) protein is RING-H2 finger protein ATL56 (ATL56).